Reading from the N-terminus, the 437-residue chain is F-box only protein 9 (437 aa).

Residues 1 to 26 (MSAEAEEDCHSDADRVGDEGNESPAE) are disordered. An N-acetylalanine modification is found at Ser-2. Positions 8–26 (DCHSDADRVGDEGNESPAE) are enriched in basic and acidic residues. His-10 bears the Phosphoserine mark. Residues 84-117 (ARELFLQAVEEEQNGALYEAIKFYRRAMQLVPDI) form a TPR repeat. Ser-126 carries the post-translational modification Phosphoserine. Residues 175–226 (QTHISVLPMEVLMYIFRWVVSSDLDLRSLEQLSLVCRGFYICARDPEIWRLA) enclose the F-box domain.

As to quaternary structure, part of the SCF (SKP1-CUL1-F-box) E3 ubiquitin-protein ligase complex SCF(FBXO9) composed of CUL1, SKP1, RBX1 and FBXO9. Interacts with TTI1 and TELO2; when TTI1 and TELO2 are phosphorylated by CK2.

The protein localises to the cytoplasm. It functions in the pathway protein modification; protein ubiquitination. Substrate recognition component of a SCF (SKP1-CUL1-F-box protein) E3 ubiquitin-protein ligase complex which mediates the ubiquitination and subsequent proteasomal degradation of target proteins and plays a role in several biological processes such as cell cycle, cell proliferation, or maintenance of chromosome stability. Ubiquitinates mTORC1-bound TTI1 and TELO2 when they are phosphorylated by CK2 following growth factor deprivation, leading to their degradation. In contrast, does not mediate ubiquitination of TTI1 and TELO2 when they are part of the mTORC2 complex. As a consequence, mTORC1 is inactivated to restrain cell growth and protein translation, while mTORC2 is the activated due to the relief of feedback inhibition by mTORC1. Plays a role in maintaining epithelial cell survival by regulating the turn-over of chromatin modulator PRMT4 through ubiquitination and degradation by the proteasomal pathway. Also regulates PPARgamma stability by facilitating PPARgamma/PPARG ubiquitination and thereby plays a role in adipocyte differentiation. This chain is F-box only protein 9 (Fbxo9), found in Mus musculus (Mouse).